Here is a 620-residue protein sequence, read N- to C-terminus: Glutathione-regulated potassium-efflux system protein KefC (620 aa).

Helical transmembrane passes span histidine 4–valine 24, leucine 26–leucine 46, serine 54–leucine 74, glycine 90–leucine 110, valine 114–methionine 134, phenylalanine 149–leucine 169, methionine 178–leucine 198, valine 218–glycine 238, glycine 270–leucine 290, leucine 294–isoleucine 314, tryptophan 327–glutamine 347, and serine 359–asparagine 379. Residues glutamine 399–threonine 518 form the RCK N-terminal domain. Residues glycine 597–serine 620 are disordered.

This sequence belongs to the monovalent cation:proton antiporter 2 (CPA2) transporter (TC 2.A.37) family. KefC subfamily. As to quaternary structure, homodimer. Interacts with the regulatory subunit KefF.

The protein localises to the cell inner membrane. In terms of biological role, pore-forming subunit of a potassium efflux system that confers protection against electrophiles. Catalyzes K(+)/H(+) antiport. This chain is Glutathione-regulated potassium-efflux system protein KefC, found in Escherichia coli (strain K12 / MC4100 / BW2952).